Reading from the N-terminus, the 197-residue chain is Probable S-adenosylmethionine-dependent methyltransferase MJ0882 (197 aa).

S-adenosyl-L-methionine is bound by residues 63 to 67 (GCGYG), Asp84, and Asn129. 129–132 (NPPI) lines the substrate pocket.

It belongs to the methyltransferase superfamily.

Functionally, probable methyltransferase that uses S-adenosylmethionine as the methyl donor. Binds neither NAD nor NADP in vitro. The polypeptide is Probable S-adenosylmethionine-dependent methyltransferase MJ0882 (Methanocaldococcus jannaschii (strain ATCC 43067 / DSM 2661 / JAL-1 / JCM 10045 / NBRC 100440) (Methanococcus jannaschii)).